The sequence spans 257 residues: Imidazole glycerol phosphate synthase subunit HisF (257 aa).

Active-site residues include Asp-11 and Asp-130.

The protein belongs to the HisA/HisF family. Heterodimer of HisH and HisF.

It is found in the cytoplasm. It catalyses the reaction 5-[(5-phospho-1-deoxy-D-ribulos-1-ylimino)methylamino]-1-(5-phospho-beta-D-ribosyl)imidazole-4-carboxamide + L-glutamine = D-erythro-1-(imidazol-4-yl)glycerol 3-phosphate + 5-amino-1-(5-phospho-beta-D-ribosyl)imidazole-4-carboxamide + L-glutamate + H(+). It functions in the pathway amino-acid biosynthesis; L-histidine biosynthesis; L-histidine from 5-phospho-alpha-D-ribose 1-diphosphate: step 5/9. IGPS catalyzes the conversion of PRFAR and glutamine to IGP, AICAR and glutamate. The HisF subunit catalyzes the cyclization activity that produces IGP and AICAR from PRFAR using the ammonia provided by the HisH subunit. This is Imidazole glycerol phosphate synthase subunit HisF from Xylella fastidiosa (strain M23).